The sequence spans 176 residues: Ribosome maturation factor RimM (176 aa).

Residues 100–173 (PEEYYDYQLI…RLRIDPPPGL (74 aa)) enclose the PRC barrel domain.

It belongs to the RimM family. In terms of assembly, binds ribosomal protein uS19.

Its subcellular location is the cytoplasm. Its function is as follows. An accessory protein needed during the final step in the assembly of 30S ribosomal subunit, possibly for assembly of the head region. Essential for efficient processing of 16S rRNA. May be needed both before and after RbfA during the maturation of 16S rRNA. It has affinity for free ribosomal 30S subunits but not for 70S ribosomes. In Acidothermus cellulolyticus (strain ATCC 43068 / DSM 8971 / 11B), this protein is Ribosome maturation factor RimM.